Here is a 223-residue protein sequence, read N- to C-terminus: Adenylate kinase 4, mitochondrial (223 aa).

Position 15 to 20 (15 to 20) interacts with a ribonucleoside 5'-triphosphate; the sequence is GSGKGT. The segment at 35–64 is NMP; the sequence is SSGHFLRENIKANTEVGEMAKQYIEKSLLV. AMP is bound by residues serine 36 and arginine 41. Lysine 60 bears the N6-succinyllysine mark. AMP contacts are provided by residues 62–64, 89–92, and glutamine 96; these read LLV and GFPR. The tract at residues 125–162 is LID; sequence RRWIHPPSGRVYNLDFNPPHVHGIDDVTGEPLVQQEDD. Residues arginine 126 and 135-136 each bind a ribonucleoside 5'-triphosphate; that span reads VY. Arginine 170 serves as a coordination point for AMP. An N6-acetyllysine modification is found at lysine 175. Residues lysine 179 and lysine 186 each carry the N6-acetyllysine; alternate modification. Lysine 179 and lysine 186 each carry N6-succinyllysine; alternate. Threonine 199 contributes to the a ribonucleoside 5'-triphosphate binding site.

It belongs to the adenylate kinase family. AK3 subfamily. In terms of assembly, monomer. Interacts with SLC25A5/ANT2.

It is found in the mitochondrion matrix. It catalyses the reaction a ribonucleoside 5'-phosphate + ATP = a ribonucleoside 5'-diphosphate + ADP. It carries out the reaction AMP + ATP = 2 ADP. The enzyme catalyses GTP + AMP = GDP + ADP. The catalysed reaction is CMP + ATP = CDP + ADP. It catalyses the reaction GTP + CMP = CDP + GDP. It carries out the reaction dAMP + ATP = dADP + ADP. The enzyme catalyses dCMP + ATP = dCDP + ADP. The catalysed reaction is a 2'-deoxyribonucleoside 5'-diphosphate + ATP = a 2'-deoxyribonucleoside 5'-triphosphate + ADP. It catalyses the reaction a ribonucleoside 5'-diphosphate + ATP = a ribonucleoside 5'-triphosphate + ADP. It carries out the reaction GDP + ATP = GTP + ADP. The enzyme catalyses CDP + GTP = CTP + GDP. The catalysed reaction is CDP + ATP = CTP + ADP. It catalyses the reaction UDP + ATP = UTP + ADP. It carries out the reaction GTP + UDP = UTP + GDP. The enzyme catalyses dADP + GTP = dATP + GDP. The catalysed reaction is dCDP + GTP = dCTP + GDP. It catalyses the reaction dCDP + ATP = dCTP + ADP. It carries out the reaction dGDP + ATP = dGTP + ADP. The enzyme catalyses dTDP + GTP = dTTP + GDP. The catalysed reaction is dTDP + ATP = dTTP + ADP. Its function is as follows. Broad-specificity mitochondrial nucleoside phosphate kinase involved in cellular nucleotide homeostasis by catalyzing nucleoside-phosphate interconversions. Similar to other adenylate kinases, preferentially catalyzes the phosphorylation of the nucleoside monophosphate AMP with ATP as phosphate donor to produce ADP. Phosphorylates only AMP when using GTP as phosphate donor. In vitro, can also catalyze the phosphorylation of CMP, dAMP and dCMP and use GTP as an alternate phosphate donor. Moreover, exhibits a diphosphate kinase activity, producing ATP, CTP, GTP, UTP, TTP, dATP, dCTP and dGTP from the corresponding diphosphate substrates with either ATP or GTP as phosphate donors. Plays a role in controlling cellular ATP levels by regulating phosphorylation and activation of the energy sensor protein kinase AMPK. Plays a protective role in the cellular response to oxidative stress. The protein is Adenylate kinase 4, mitochondrial of Pongo abelii (Sumatran orangutan).